Reading from the N-terminus, the 118-residue chain is Small ribosomal subunit protein uS13 (118 aa).

The disordered stretch occupies residues 94–118 (SLPVRGQRTKTNARTRKGPRKPIKK).

The protein belongs to the universal ribosomal protein uS13 family. Part of the 30S ribosomal subunit. Forms a loose heterodimer with protein S19. Forms two bridges to the 50S subunit in the 70S ribosome.

Functionally, located at the top of the head of the 30S subunit, it contacts several helices of the 16S rRNA. In the 70S ribosome it contacts the 23S rRNA (bridge B1a) and protein L5 of the 50S subunit (bridge B1b), connecting the 2 subunits; these bridges are implicated in subunit movement. Contacts the tRNAs in the A and P-sites. This chain is Small ribosomal subunit protein uS13, found in Haemophilus influenzae (strain 86-028NP).